The primary structure comprises 274 residues: Hydroxyacylglutathione hydrolase, cytoplasmic isozyme (274 aa).

Residues His-59, His-61, Asp-63, His-64, His-121, and Asp-144 each coordinate Zn(2+). Substrate contacts are provided by residues Arg-153 and His-188 to Tyr-190. Zn(2+) is bound at residue His-188. Ser-257 bears the Phosphoserine mark. Arg-268–Lys-271 serves as a coordination point for substrate.

This sequence belongs to the metallo-beta-lactamase superfamily. Glyoxalase II family. The cofactor is Zn(2+).

Its subcellular location is the cytoplasm. The enzyme catalyses an S-(2-hydroxyacyl)glutathione + H2O = a 2-hydroxy carboxylate + glutathione + H(+). It carries out the reaction (R)-S-lactoylglutathione + H2O = (R)-lactate + glutathione + H(+). It functions in the pathway secondary metabolite metabolism; methylglyoxal degradation; (R)-lactate from methylglyoxal: step 2/2. Its activity is regulated as follows. Inhibited by various thiol compounds such as glutathione and coenzyme A. Thiolesterase that catalyzes the hydrolysis of S-D-lactoylglutathione to form glutathione and D-lactic acid. Involved in the metabolism of methylglyoxal, a toxic compound for yeast proliferation, by converting methylglyoxal to lactate via S-D-lactoylglutathione by sequential enzyme reactions catalyzed by glyoxalase I and glyoxalase II. The polypeptide is Hydroxyacylglutathione hydrolase, cytoplasmic isozyme (Saccharomyces cerevisiae (strain ATCC 204508 / S288c) (Baker's yeast)).